A 450-amino-acid polypeptide reads, in one-letter code: Crinkler effector protein 63 (450 aa).

Positions 1–17 are cleaved as a signal peptide; it reads MVKLFCAIVGAAGSAFP. The segment at 18–55 is LQLFLAK domain; that stretch reads VDIDAGQSAGDLKDAIKAKNPATITCDAKDLQLSLAKT. Positions 58 to 117 are DWL domain; sequence GAWLPDDDQAALDLEDGKVHEDIQALIDGEKMKATWTIEDVLTANNMTKRKGRAPKSRQI. Residue asparagine 103 is glycosylated (N-linked (GlcNAc...) asparagine). An HVLVXXP motif motif is present at residues 118-124; it reads HVLVVVP. The effector domain stretch occupies residues 125-450; that stretch reads EGAFGSASET…RSIPTFSYFS (326 aa). A Nuclear localization signal (NLS) motif is present at residues 218-224; the sequence is QRKRYRR. Asparagine 342 carries N-linked (GlcNAc...) asparagine glycosylation.

The protein belongs to the Crinkler effector family. In terms of assembly, forms a homodimer via an inverted association manner. Forms heterodimers with CRN79 and CRN115.

Its subcellular location is the secreted. The protein localises to the host nucleus. It localises to the host nucleoplasm. In terms of biological role, secreted effector that, with CRN115, is critical to pathogenesis by modulating host defenses. Induces cell death in plant host cells. Suppresses callose deposition and affects expression of defense-related genes including two salicylic acid (SA) signal-induced and antimicrobial PR genes (PR1 and PR2), and genes involved in jasmonic acid (JA)/ethylene (ET)-mediated defense pathway (ERF1, ORA59, PDF1.2). CRN115 and CRN63 may share the same molecular host targets that are involved in the cell death signal transduction pathway and that their differential activities are dependent on plant nuclear localization or not. Does not affect MAPK activation and BIK1 phosphorylation and acts downstream of the MAPK cascades in PTI signaling. This chain is Crinkler effector protein 63, found in Phytophthora sojae (strain P6497) (Soybean stem and root rot agent).